The following is a 798-amino-acid chain: Integrin beta-1 (798 aa).

An N-terminal signal peptide occupies residues 1–20; that stretch reads MNLQLIFWIGLISSVCCVFG. The Extracellular segment spans residues 21–728; it reads QADENRCLKA…ETPECPTGPD (708 aa). Residues 26 to 76 form the PSI domain; it reads RCLKANAKSCGECIQAGPNCGWCTNSTFLQEGMPTSARCDDLEALKKKGCH. Cystine bridges form between Cys-27/Cys-45, Cys-35/Cys-464, Cys-38/Cys-64, Cys-48/Cys-75, Cys-207/Cys-213, Cys-261/Cys-301, Cys-401/Cys-415, Cys-435/Cys-462, Cys-466/Cys-486, Cys-477/Cys-489, Cys-491/Cys-500, Cys-502/Cys-533, Cys-516/Cys-531, Cys-525/Cys-536, Cys-538/Cys-553, Cys-555/Cys-576, Cys-560/Cys-574, Cys-568/Cys-579, Cys-581/Cys-590, Cys-592/Cys-615, Cys-599/Cys-613, Cys-607/Cys-618, Cys-620/Cys-630, Cys-633/Cys-636, Cys-640/Cys-691, Cys-646/Cys-665, Cys-649/Cys-661, and Cys-699/Cys-723. Asn-50 is a glycosylation site (N-linked (GlcNAc...) asparagine). Residues 75-91 show a composition bias toward basic and acidic residues; sequence CHPNDIENPRGSKDIKK. The tract at residues 75-105 is disordered; that stretch reads CHPNDIENPRGSKDIKKNKNVTNRSKGTAEK. 2 N-linked (GlcNAc...) asparagine glycosylation sites follow: Asn-94 and Asn-97. One can recognise a VWFA domain in the interval 140-378; it reads DYPIDLYYLM…QLIIDAYNSL (239 aa). Mg(2+) contacts are provided by Ser-152 and Ser-154. Positions 154, 157, 158, and 189 each coordinate Ca(2+). A CX3CL1-binding region spans residues 207-213; the sequence is CTNEQNC. Asn-212 carries N-linked (GlcNAc...) asparagine glycosylation. Asn-244, Asp-246, Pro-248, and Glu-249 together coordinate Ca(2+). Glu-249 contributes to the Mg(2+) binding site. N-linked (GlcNAc...) asparagine glycosylation occurs at Asn-269. A CX3CL1-binding region spans residues 295–314; the sequence is LPNDGQCHLENDVYTMSHYY. Ala-362 contacts Ca(2+). Residues Asn-363, Asn-406, and Asn-417 are each glycosylated (N-linked (GlcNAc...) asparagine). The segment at 383 to 465 is interaction with TMEM182; it reads ILENSKLPEG…IILQFICECE (83 aa). 4 I-EGF domains span residues 466-501, 502-554, 555-591, and 592-631; these read CQGE…RHCE, CSTD…KFCE, CDNF…SACD, and CSLD…PTCE. N-linked (GlcNAc...) asparagine glycosylation occurs at Asn-481. Asn-520 carries an N-linked (GlcNAc...) asparagine glycan. Asn-584 carries an N-linked (GlcNAc...) asparagine glycan. Asn-669 is a glycosylation site (N-linked (GlcNAc...) asparagine). A helical membrane pass occupies residues 729–749; that stretch reads IIPIVAGVVAGIVLIGLALLL. The Cytoplasmic segment spans residues 750–798; that stretch reads IWKLLMIIHDRREFAKFEKEKMNAKWDTGENPIYKSAVTTVVNPKYEGK. A signal for sorting from recycling endosomes; interaction with ACAP1 region spans residues 762-767; sequence EFAKFE. Thr-777 is subject to Phosphothreonine. A Phosphotyrosine modification is found at Tyr-783. Phosphoserine is present on Ser-785. The interval 785 to 792 is interaction with ITGB1BP1; the sequence is SAVTTVVN. Thr-789 carries the phosphothreonine modification. Lys-794 carries the post-translational modification N6-acetyllysine; alternate. A Glycyl lysine isopeptide (Lys-Gly) (interchain with G-Cter in SUMO1); alternate cross-link involves residue Lys-794.

Belongs to the integrin beta chain family. In terms of assembly, interacts with seprase FAP (seprase); the interaction occurs at the cell surface of invadopodia membrane in a collagen-dependent manner. Heterodimer of an alpha and a beta subunit. Beta-1 associates with either alpha-1, alpha-2, alpha-3, alpha-4, alpha-5, alpha-6, alpha-7, alpha-8, alpha-9, alpha-10, alpha-11 or alpha-V. ITGA6:ITGB1 is found in a complex with CD9; interaction takes place in oocytes and is involved in sperm-egg fusion. Binds LGALS3BP and NMRK2, when associated with alpha-7, but not with alpha-5. Interacts with FLNB, FLNC and RANBP9. Interacts with KRT1 in the presence of RACK1 and SRC. Interacts with JAML; integrin alpha-4/beta-1 may regulate leukocyte to endothelial cells adhesion by controlling JAML homodimerization. Interacts with RAB21. Interacts (via the cytoplasmic region) with RAB25 (via the hypervariable C-terminal region). Interacts with MYO10. Interacts with ITGB1BP1 (via C-terminal region); the interaction is a prerequisite for focal adhesion disassembly. Interacts with TLN1; the interaction is prevented by competitive binding of ITGB1BP1. Interacts with ACAP1; required for ITGB1 recycling. Interacts with ASAP3. Interacts with FERMT2; the interaction is inhibited in presence of ITGB1BP1. Interacts with DAB2. Interacts with FGR and HCK. Interacts with EMP2; the interaction may be direct or indirect and ITGB1 has a heterodimer form. ITGA5:ITGB1 interacts with CCN3. ITGA4:ITGB1 is found in a ternary complex with CX3CR1 and CX3CL1. ITGA5:ITGB1 interacts with FBN1. ITGA5:ITGB1 interacts with IL1B. Interacts with MDK. ITGA4:ITGB1 interacts with MDK; this interaction mediates MDK-induced osteoblast cells migration through PXN phosphorylation. ITGA6:ITGB1 interacts with MDK; this interaction mediates MDK-induced neurite-outgrowth. ITGA5:ITGB1 interacts with ACE2. Interacts with TMEM182 and LAMB1. Interacts with tensin TNS3; TNS3 also interacts with PEAK1, thus acting as an adapter molecule to bridge the association of PEAK1 with ITGB1. Interacts with tensin TNS4; the interaction displaces tensin TNS3 from the ITGB1 cytoplasmic tail and promotes ITGB1 stability. Integrin ITGA9:ITGB1 interacts with SPP1/OPN (via N-terminus). Integrin ITGA9:ITGB1 interacts with TNC/TNFN3 (via the 3rd Fibronectin type-III domain). Integrins ITGA4:ITGB1 and ITGA9:ITGB1 interact with SVEP1 (via Sushi domain 21); thereby inhibit Ca(2+) intracellular signaling and as a result repress vasocontraction. ITGA4:ITGB1 and ITGA5:ITGB1 interacts with SELP. Interacts with CD248. ITGA5:ITGB1 interacts with IGFBP1. ITGA4:ITGB1 interacts with BCAM. Interacts with ADGRG6. As to quaternary structure, interacts with the C-terminal region of FLNC. Interacts with filamin FLNA isoform 3/VAR-1. Interacts with ACE2. Interacts with alpha-7B in cardiomyocytes of adult heart and alpha-7A and alpha-7B in adult skeletal muscle. Interacts with filamin FLNA isoform 3/VAR-1.

The protein localises to the cell membrane. The protein resides in the cell projection. Its subcellular location is the invadopodium membrane. It localises to the ruffle membrane. It is found in the recycling endosome. The protein localises to the melanosome. The protein resides in the lamellipodium. Its subcellular location is the ruffle. It localises to the cell junction. It is found in the focal adhesion. The protein localises to the sarcolemma. Integrins alpha-1/beta-1, alpha-2/beta-1, alpha-10/beta-1 and alpha-11/beta-1 are receptors for collagen. Integrins alpha-1/beta-1 and alpha-2/beta-2 recognize the proline-hydroxylated sequence G-F-P-G-E-R in collagen. Integrins alpha-2/beta-1, alpha-3/beta-1, alpha-4/beta-1, alpha-5/beta-1, alpha-8/beta-1, alpha-10/beta-1, alpha-11/beta-1 and alpha-V/beta-1 are receptors for fibronectin. Alpha-4/beta-1 recognizes one or more domains within the alternatively spliced CS-1 and CS-5 regions of fibronectin. Integrin alpha-5/beta-1 is a receptor for fibrinogen. Integrin alpha-1/beta-1, alpha-2/beta-1, alpha-6/beta-1 and alpha-7/beta-1 are receptors for lamimin. Integrin alpha-6/beta-1 (ITGA6:ITGB1) is present in oocytes and is involved in sperm-egg fusion. Integrin alpha-4/beta-1 is a receptor for VCAM1 and recognizes the sequence Q-I-D-S in VCAM1. Integrin alpha-9/beta-1 is a receptor for VCAM1, cytotactin and osteopontin. It recognizes the sequence A-E-I-D-G-I-E-L in cytotactin. Integrin alpha-3/beta-1 is a receptor for epiligrin, thrombospondin and CSPG4. Integrin alpha-3/beta-1 provides a docking site for FAP (seprase) at invadopodia plasma membranes in a collagen-dependent manner and hence may participate in the adhesion, formation of invadopodia and matrix degradation processes, promoting cell invasion. Alpha-3/beta-1 may mediate with LGALS3 the stimulation by CSPG4 of endothelial cells migration. Integrin alpha-V/beta-1 is a receptor for vitronectin. Beta-1 integrins recognize the sequence R-G-D in a wide array of ligands. When associated with alpha-7/beta-1 integrin, regulates cell adhesion and laminin matrix deposition. Involved in promoting endothelial cell motility and angiogenesis. Involved in osteoblast compaction through the fibronectin fibrillogenesis cell-mediated matrix assembly process and the formation of mineralized bone nodules. May be involved in up-regulation of the activity of kinases such as PKC via binding to KRT1. Together with KRT1 and RACK1, serves as a platform for SRC activation or inactivation. Plays a mechanistic adhesive role during telophase, required for the successful completion of cytokinesis. ITGA4:ITGB1 binds to fractalkine (CX3CL1) and may act as its coreceptor in CX3CR1-dependent fractalkine signaling. ITGA4:ITGB1 and ITGA5:ITGB1 bind to PLA2G2A via a site (site 2) which is distinct from the classical ligand-binding site (site 1) and this induces integrin conformational changes and enhanced ligand binding to site 1. ITGA5:ITGB1 acts as a receptor for fibrillin-1 (FBN1) and mediates R-G-D-dependent cell adhesion to FBN1. ITGA5:ITGB1 acts as a receptor for fibronectin FN1 and mediates R-G-D-dependent cell adhesion to FN1. ITGA5:ITGB1 is a receptor for IL1B and binding is essential for IL1B signaling. ITGA5:ITGB3 is a receptor for soluble CD40LG and is required for CD40/CD40LG signaling. Plays an important role in myoblast differentiation and fusion during skeletal myogenesis. ITGA9:ITGB1 may play a crucial role in SVEP1/polydom-mediated myoblast cell adhesion. Integrins ITGA9:ITGB1 and ITGA4:ITGB1 repress PRKCA-mediated L-type voltage-gated channel Ca(2+) influx and ROCK-mediated calcium sensitivity in vascular smooth muscle cells via their interaction with SVEP1, thereby inhibit vasocontraction. The polypeptide is Integrin beta-1 (ITGB1) (Bos taurus (Bovine)).